Consider the following 1598-residue polypeptide: Pentafunctional AROM polypeptide (1598 aa).

Residues 1–384 (MGVPTKISIL…YEPRASTVSN (384 aa)) form a 3-dehydroquinate synthase region. NAD(+) contacts are provided by residues 44–46 (DTN), 81–84 (ESSK), 114–116 (GGV), and Asp119. 7-phospho-2-dehydro-3-deoxy-D-arabino-heptonate is bound at residue Arg130. 139-140 (TT) serves as a coordination point for NAD(+). 7-phospho-2-dehydro-3-deoxy-D-arabino-heptonate is bound by residues Asp146 and Lys152. Lys161 serves as a coordination point for NAD(+). Asn162 provides a ligand contact to 7-phospho-2-dehydro-3-deoxy-D-arabino-heptonate. NAD(+)-binding positions include 179-182 (FLNT) and Asn190. Position 194 (Glu194) interacts with Zn(2+). Residues 194-197 (EVIK) and Lys250 each bind 7-phospho-2-dehydro-3-deoxy-D-arabino-heptonate. The Proton acceptor; for 3-dehydroquinate synthase activity role is filled by Glu260. 7-phospho-2-dehydro-3-deoxy-D-arabino-heptonate contacts are provided by residues 264-268 (RNLLN) and His271. His271 serves as a coordination point for Zn(2+). His275 serves as the catalytic Proton acceptor; for 3-dehydroquinate synthase activity. Residues His287 and Lys356 each contribute to the 7-phospho-2-dehydro-3-deoxy-D-arabino-heptonate site. His287 is a binding site for Zn(2+). The interval 397 to 842 (VYPGFPKSLN…WNTLAQTFKV (446 aa)) is EPSP synthase. The active-site For EPSP synthase activity is the Cys824. The shikimate kinase stretch occupies residues 867–1059 (AASIFIIGMR…RRKENTFFVS (193 aa)). 874–881 (GMRGAGKT) lines the ATP pocket. Residues 1060-1280 (LTFPDLTPAS…AAPGQLSARE (221 aa)) form a 3-dehydroquinase region. The active-site Proton acceptor; for 3-dehydroquinate dehydratase activity is the His1183. Lys1211 acts as the Schiff-base intermediate with substrate; for 3-dehydroquinate dehydratase activity in catalysis. Positions 1293–1598 (AKKFAVIGKP…GVSSSDDTIS (306 aa)) are shikimate dehydrogenase.

The protein in the N-terminal section; belongs to the sugar phosphate cyclases superfamily. Dehydroquinate synthase family. In the 2nd section; belongs to the EPSP synthase family. This sequence in the 3rd section; belongs to the shikimate kinase family. It in the 4th section; belongs to the type-I 3-dehydroquinase family. The protein in the C-terminal section; belongs to the shikimate dehydrogenase family. Homodimer. Zn(2+) is required as a cofactor.

It is found in the cytoplasm. It catalyses the reaction 7-phospho-2-dehydro-3-deoxy-D-arabino-heptonate = 3-dehydroquinate + phosphate. The catalysed reaction is 3-dehydroquinate = 3-dehydroshikimate + H2O. It carries out the reaction shikimate + NADP(+) = 3-dehydroshikimate + NADPH + H(+). The enzyme catalyses shikimate + ATP = 3-phosphoshikimate + ADP + H(+). It catalyses the reaction 3-phosphoshikimate + phosphoenolpyruvate = 5-O-(1-carboxyvinyl)-3-phosphoshikimate + phosphate. The protein operates within metabolic intermediate biosynthesis; chorismate biosynthesis; chorismate from D-erythrose 4-phosphate and phosphoenolpyruvate: step 2/7. Its pathway is metabolic intermediate biosynthesis; chorismate biosynthesis; chorismate from D-erythrose 4-phosphate and phosphoenolpyruvate: step 3/7. It functions in the pathway metabolic intermediate biosynthesis; chorismate biosynthesis; chorismate from D-erythrose 4-phosphate and phosphoenolpyruvate: step 4/7. It participates in metabolic intermediate biosynthesis; chorismate biosynthesis; chorismate from D-erythrose 4-phosphate and phosphoenolpyruvate: step 5/7. The protein operates within metabolic intermediate biosynthesis; chorismate biosynthesis; chorismate from D-erythrose 4-phosphate and phosphoenolpyruvate: step 6/7. The AROM polypeptide catalyzes 5 consecutive enzymatic reactions in prechorismate polyaromatic amino acid biosynthesis. The protein is Pentafunctional AROM polypeptide of Paracoccidioides brasiliensis (strain Pb18).